Consider the following 200-residue polypeptide: Recombination protein RecR (200 aa).

Residues 58–75 form a C4-type zinc finger; the sequence is CPTCFCLKSHPESVCSFC. A Toprim domain is found at 82-177; that stretch reads SILCIVATPK…SVSRLALGLP (96 aa).

The protein belongs to the RecR family.

In terms of biological role, may play a role in DNA repair. It seems to be involved in an RecBC-independent recombinational process of DNA repair. It may act with RecF and RecO. In Chlamydia abortus (strain DSM 27085 / S26/3) (Chlamydophila abortus), this protein is Recombination protein RecR.